Here is a 354-residue protein sequence, read N- to C-terminus: Ferrochelatase (354 aa).

The Fe cation site is built by H214 and E295.

This sequence belongs to the ferrochelatase family.

The protein localises to the cytoplasm. It carries out the reaction heme b + 2 H(+) = protoporphyrin IX + Fe(2+). The protein operates within porphyrin-containing compound metabolism; protoheme biosynthesis; protoheme from protoporphyrin-IX: step 1/1. Functionally, catalyzes the ferrous insertion into protoporphyrin IX. This is Ferrochelatase from Burkholderia lata (strain ATCC 17760 / DSM 23089 / LMG 22485 / NCIMB 9086 / R18194 / 383).